The following is a 142-amino-acid chain: Large ribosomal subunit protein bL17 (142 aa).

It belongs to the bacterial ribosomal protein bL17 family. In terms of assembly, part of the 50S ribosomal subunit. Contacts protein L32.

This Chlamydia felis (strain Fe/C-56) (Chlamydophila felis) protein is Large ribosomal subunit protein bL17.